The chain runs to 300 residues: Cyclic nucleotide synthase CdnE01 (300 aa).

Mg(2+) is bound by residues Asp63, Asp65, and Asp137.

This sequence belongs to the CD-NTase family. E01 subfamily. Mg(2+) is required as a cofactor.

With respect to regulation, binds to and probably activated by a virus-derived, approximately 400 nucleotide RNA (called CBASS-activating bacteriophage RNA, cabRNA) that begins in the viral terminase subunit terS and extends into terL, as well as by a shorter RNA with part of the cabRNA sequence able to form a hairpin. RNA secondary and/or tertiary structure, as well as viral infection itself, are important for CdnE activation. In terms of biological role, cyclic nucleotide synthase (second messenger synthase) of a CBASS antivirus system. CBASS (cyclic oligonucleotide-based antiphage signaling system) provides immunity against bacteriophage. The CD-NTase protein synthesizes cyclic nucleotides in response to infection; these serve as specific second messenger signals. The signals activate a diverse range of effectors, leading to bacterial cell death and thus abortive phage infection. A type I-B CBASS system. Functionally, protects S.aureus against phage infection. When the CBASS operon (cdnE and the following gene) is introduced in S.aureus strain RN4220 there is strong protection against lytic DNA phages 80alpha-vir and phi-NM1-gamma-6 but little to no protection against phages phi-NM4-gamma-4 or phi-12-gamma-3. This Staphylococcus haemolyticus protein is Cyclic nucleotide synthase CdnE01.